The sequence spans 545 residues: Glucose-6-phosphate isomerase (545 aa).

Residue glutamate 351 is the Proton donor of the active site. Catalysis depends on residues histidine 382 and lysine 510.

The protein belongs to the GPI family.

The protein localises to the cytoplasm. It carries out the reaction alpha-D-glucose 6-phosphate = beta-D-fructose 6-phosphate. Its pathway is carbohydrate biosynthesis; gluconeogenesis. It participates in carbohydrate degradation; glycolysis; D-glyceraldehyde 3-phosphate and glycerone phosphate from D-glucose: step 2/4. In terms of biological role, catalyzes the reversible isomerization of glucose-6-phosphate to fructose-6-phosphate. In Shewanella loihica (strain ATCC BAA-1088 / PV-4), this protein is Glucose-6-phosphate isomerase.